We begin with the raw amino-acid sequence, 86 residues long: Small ribosomal subunit protein bS16 (86 aa).

It belongs to the bacterial ribosomal protein bS16 family.

The chain is Small ribosomal subunit protein bS16 from Syntrophotalea carbinolica (strain DSM 2380 / NBRC 103641 / GraBd1) (Pelobacter carbinolicus).